We begin with the raw amino-acid sequence, 99 residues long: MFEQGLILSAYLLCVGFFGLITSRNMVRALMSLELIFNAITLNFITLSNLFDNRETGEIFTLFVIAVAAAEAATGLAIALSIHRNRRSTRIDQSNLLKW.

A run of 3 helical transmembrane segments spans residues 1-21 (MFEQ…FGLI), 31-51 (MSLE…SNLF), and 59-79 (IFTL…LAIA).

This sequence belongs to the complex I subunit 4L family. As to quaternary structure, NDH is composed of at least 16 different subunits, 5 of which are encoded in the nucleus.

It is found in the plastid. Its subcellular location is the chloroplast thylakoid membrane. The catalysed reaction is a plastoquinone + NADH + (n+1) H(+)(in) = a plastoquinol + NAD(+) + n H(+)(out). It catalyses the reaction a plastoquinone + NADPH + (n+1) H(+)(in) = a plastoquinol + NADP(+) + n H(+)(out). Its function is as follows. NDH shuttles electrons from NAD(P)H:plastoquinone, via FMN and iron-sulfur (Fe-S) centers, to quinones in the photosynthetic chain and possibly in a chloroplast respiratory chain. The immediate electron acceptor for the enzyme in this species is believed to be plastoquinone. Couples the redox reaction to proton translocation, and thus conserves the redox energy in a proton gradient. This Adiantum capillus-veneris (Maidenhair fern) protein is NAD(P)H-quinone oxidoreductase subunit 4L, chloroplastic.